Consider the following 341-residue polypeptide: MEPAFGEVNQLGGVFVNGRPLPNAIRLRIVELAQLGIRPCDISRQLRVSHGCVSKILARYNETGSILPGAIGGSKPRVTTPTVVKHIRTYKQRDPGIFAWEIRDRLLADGVCDKYNVPSVSSISRILRNKIGNLAQQGHYDSYKQHQPTPQPALPYNHIYSYPSPITAAAAKVPTPPGVPAIPGSVAMPRTWPSSHSVTDILGIRSITDQVSDSSPYHSPKVEEWSSLGRNNFPATAPHAVNGLEKGVLEQEAKYGQAPNGLPAVGSFVSASSMAPYPTPAQVSPYMTYSAAPSGYVAGHGWQHAGSTPLSPHNCDIPASLAFKGMQAAREGSHSVTASAL.

The segment at residues 4-130 (AFGEVNQLGG…SSISRILRNK (127 aa)) is a DNA-binding region (paired). The interval 7 to 63 (EVNQLGGVFVNGRPLPNAIRLRIVELAQLGIRPCDISRQLRVSHGCVSKILARYNET) is PAI subdomain. The segment at 82 to 130 (TVVKHIRTYKQRDPGIFAWEIRDRLLADGVCDKYNVPSVSSISRILRNK) is RED subdomain. The interval 168–189 (AAAAKVPTPPGVPAIPGSVAMP) is interaction with KDM5B.

As to quaternary structure, interacts with KDM5B.

Its subcellular location is the nucleus. Transcription factor required for normal development of thymus, parathyroid glands, ultimobranchial bodies, teeth, skeletal elements of skull and larynx as well as distal limbs. This chain is Paired box protein Pax-9 (PAX9), found in Macaca mulatta (Rhesus macaque).